The primary structure comprises 344 residues: MDSTVVLITGCSSGIGLHLAVRLASDRSQSFKVYATLRDLKSQGPLLEAARAQGCPPGSLEILELDVRDSESVAAARACVTEGRVDVLVCNAGRGLFGPLEAHELNAVGAVLDVNVLGTIRMLQAFLPDMKRRHSGRVLVTASVGGLMGLPFHEVYCASKFALEGLCESLAILLPLFGVHVSLIECGAVHTAFHEKLEGGPGGALERADAQTRHLFAHYQRGYEQALSEAQDPEEVTELFLTAMRAPQPALRYFSTNRFLPLARMRTEDPSGSSYVEAMHREAFSDLQVQEGAKAGAQVSGDPDTPPRALICLPECAIPRVTAELGWSASDKPGQNKSCYQQKI.

3–32 (STVVLITGCSSGIGLHLAVRLASDRSQSFK) serves as a coordination point for NAD(+). S143 provides a ligand contact to substrate. Residue Y156 is the Proton acceptor of the active site.

It belongs to the short-chain dehydrogenases/reductases (SDR) family. As to quaternary structure, homodimer.

The protein localises to the cytoplasm. It carries out the reaction 17beta-estradiol + NAD(+) = estrone + NADH + H(+). The enzyme catalyses 17beta-estradiol + NADP(+) = estrone + NADPH + H(+). The protein operates within steroid biosynthesis; estrogen biosynthesis. Its function is as follows. Favors the reduction of estrogens and androgens. Uses preferentially NADH. The chain is Estradiol 17-beta-dehydrogenase 1 (Hsd17b1) from Rattus norvegicus (Rat).